Here is a 374-residue protein sequence, read N- to C-terminus: RNA ligase 1 (374 aa).

ATP is bound by residues Tyr-37, Arg-54, and Lys-75. The active-site N6-AMP-lysine intermediate is the Lys-99. Residues Glu-159, Lys-240, and Lys-242 each contribute to the ATP site. Residue Asp-272 coordinates Mg(2+).

It belongs to the Tequatrovirus RNA ligase 1 family. It depends on Mg(2+) as a cofactor.

It carries out the reaction ATP + (ribonucleotide)n-3'-hydroxyl + 5'-phospho-(ribonucleotide)m = (ribonucleotide)n+m + AMP + diphosphate.. Its function is as follows. Involved in countering a host defense mechanism which, following viral infection, activates the host anticodon nuclease and shuts off viral translation. Repairs 5'-PO4 and 3'-OH groups in the cleaved host tRNA. The nick ligation reaction entails three nucleotidyl transfer steps. In the first step, the RNA ligase reacts with ATP in the absence of nucleic acid to form a covalent ligase-AMP intermediate and release pyrophosphate. In step 2, the ligase-AMP binds to the nicked duplex nucleic acid and transfers the adenylate to the 5'-PO4 terminus to form an adenylylated nicked intermediate. In step 3, the RNA ligase directs the attack of the nick 3'-OH on the 5'-phosphoanhydride linkage, resulting in a repaired 3'-5' phosphodiester and release of AMP. The protein is RNA ligase 1 (63) of Enterobacteria phage T4 (Bacteriophage T4).